We begin with the raw amino-acid sequence, 190 residues long: Endo-1,4-beta-xylanase (190 aa).

Positions 1–190 (QTIGPGTGYS…SSGSASITVS (190 aa)) constitute a GH11 domain. The active-site Nucleophile is the glutamate 86. The active-site Proton donor is glutamate 177.

The protein belongs to the glycosyl hydrolase 11 (cellulase G) family.

It carries out the reaction Endohydrolysis of (1-&gt;4)-beta-D-xylosidic linkages in xylans.. It participates in glycan degradation; xylan degradation. In Trichoderma harzianum (Hypocrea lixii), this protein is Endo-1,4-beta-xylanase.